The sequence spans 163 residues: Neurotrophin-3 (163 aa).

Positions 1 to 3 (IQS) are cleaved as a signal peptide. The propeptide occupies 4–119 (TSMDQGILTE…VLNRTSRRKR (116 aa)). The N-linked (GlcNAc...) asparagine glycan is linked to asparagine 112. Residues 112-132 (NRTSRRKREGKSHRGEYSVCD) are disordered. A compositionally biased stretch (basic and acidic residues) spans 123 to 132 (SHRGEYSVCD).

It belongs to the NGF-beta family.

Its subcellular location is the secreted. Seems to promote the survival of visceral and proprioceptive sensory neurons. The chain is Neurotrophin-3 (NTF3) from Exiliboa placata (Oaxacan dwarf boa).